A 628-amino-acid polypeptide reads, in one-letter code: DNA mismatch repair protein MutL (628 aa).

The interval 334–367 is disordered; the sequence is SDFAQPSADNMPKPESPGAPAAHGRKDDAPAAHA. Residues 357-367 are compositionally biased toward basic and acidic residues; that stretch reads GRKDDAPAAHA.

It belongs to the DNA mismatch repair MutL/HexB family.

Functionally, this protein is involved in the repair of mismatches in DNA. It is required for dam-dependent methyl-directed DNA mismatch repair. May act as a 'molecular matchmaker', a protein that promotes the formation of a stable complex between two or more DNA-binding proteins in an ATP-dependent manner without itself being part of a final effector complex. The sequence is that of DNA mismatch repair protein MutL from Opitutus terrae (strain DSM 11246 / JCM 15787 / PB90-1).